Here is a 257-residue protein sequence, read N- to C-terminus: Imidazole glycerol phosphate synthase subunit HisF (257 aa).

Active-site residues include Asp-12 and Asp-131.

The protein belongs to the HisA/HisF family. Heterodimer of HisH and HisF.

Its subcellular location is the cytoplasm. The enzyme catalyses 5-[(5-phospho-1-deoxy-D-ribulos-1-ylimino)methylamino]-1-(5-phospho-beta-D-ribosyl)imidazole-4-carboxamide + L-glutamine = D-erythro-1-(imidazol-4-yl)glycerol 3-phosphate + 5-amino-1-(5-phospho-beta-D-ribosyl)imidazole-4-carboxamide + L-glutamate + H(+). It participates in amino-acid biosynthesis; L-histidine biosynthesis; L-histidine from 5-phospho-alpha-D-ribose 1-diphosphate: step 5/9. Functionally, IGPS catalyzes the conversion of PRFAR and glutamine to IGP, AICAR and glutamate. The HisF subunit catalyzes the cyclization activity that produces IGP and AICAR from PRFAR using the ammonia provided by the HisH subunit. This chain is Imidazole glycerol phosphate synthase subunit HisF, found in Rhodococcus erythropolis (strain PR4 / NBRC 100887).